A 329-amino-acid polypeptide reads, in one-letter code: Protoheme IX farnesyltransferase (329 aa).

Transmembrane regions (helical) follow at residues Leu61–Leu81, Ala108–Asn128, Leu130–Leu150, Ile158–Gly178, Trp186–Leu206, Leu243–Phe263, and Ala284–Leu304.

It belongs to the UbiA prenyltransferase family. Protoheme IX farnesyltransferase subfamily.

Its subcellular location is the cell inner membrane. The enzyme catalyses heme b + (2E,6E)-farnesyl diphosphate + H2O = Fe(II)-heme o + diphosphate. It functions in the pathway porphyrin-containing compound metabolism; heme O biosynthesis; heme O from protoheme: step 1/1. In terms of biological role, converts heme B (protoheme IX) to heme O by substitution of the vinyl group on carbon 2 of heme B porphyrin ring with a hydroxyethyl farnesyl side group. This chain is Protoheme IX farnesyltransferase, found in Synechococcus sp. (strain RCC307).